The sequence spans 866 residues: Glycoprotein gp2 (866 aa).

The N-terminal stretch at 1–25 (MGFIYARKLLLCMAVSIYAIGSTTT) is a signal peptide. Disordered regions lie at residues 24 to 185 (TTTE…TDTT) and 319 to 619 (TAAT…IVPQ). The N-linked (GlcNAc...) asparagine; by host glycan is linked to Asn-48. The segment covering 319–442 (TAATTTAATT…PDSSTGSTST (124 aa)) has biased composition (low complexity). Over residues 443–463 (AEPSSTFTLTPSTATPSTDQF) the composition is skewed to polar residues. Low complexity-rich tracts occupy residues 464–499 (TGSSASTESDSTDSSTVPTTGTESITESSSTTEAST) and 514–526 (TPDGNTTSGNTTP). N-linked (GlcNAc...) asparagine; by host glycosylation occurs at Asn-518. A compositionally biased stretch (polar residues) spans 535 to 561 (FADTQQTPDNGVSTQHTTINDHTTANA). A compositionally biased stretch (basic residues) spans 564–574 (HAGHHRGRAGG). Asn-611 and Asn-659 each carry an N-linked (GlcNAc...) asparagine; by host glycan. A helical membrane pass occupies residues 835–855 (FALVAATTLTVTILCLLCCLY).

The protein resides in the virion membrane. In terms of biological role, virulence factor. The sequence is that of Glycoprotein gp2 from Equus caballus (Horse).